The following is a 958-amino-acid chain: Valine--tRNA ligase (958 aa).

Positions 42-52 match the 'HIGH' region motif; it reads PNVTGSLHMGH. Positions 554-558 match the 'KMSKS' region motif; sequence KMSKS. An ATP-binding site is contributed by Lys-557. Residues 887-956 adopt a coiled-coil conformation; it reads LVDVAAEMAR…TEQKAEFAKL (70 aa).

This sequence belongs to the class-I aminoacyl-tRNA synthetase family. ValS type 1 subfamily. As to quaternary structure, monomer.

It localises to the cytoplasm. The enzyme catalyses tRNA(Val) + L-valine + ATP = L-valyl-tRNA(Val) + AMP + diphosphate. In terms of biological role, catalyzes the attachment of valine to tRNA(Val). As ValRS can inadvertently accommodate and process structurally similar amino acids such as threonine, to avoid such errors, it has a 'posttransfer' editing activity that hydrolyzes mischarged Thr-tRNA(Val) in a tRNA-dependent manner. This chain is Valine--tRNA ligase, found in Shewanella oneidensis (strain ATCC 700550 / JCM 31522 / CIP 106686 / LMG 19005 / NCIMB 14063 / MR-1).